Consider the following 554-residue polypeptide: CTP synthase (554 aa).

Residues 1-265 (MTPLIFVTGG…DEIVVNQLKL (265 aa)) form an amidoligase domain region. Serine 13 is a binding site for CTP. Serine 13 serves as a coordination point for UTP. 14-19 (SLGKGI) lines the ATP pocket. Aspartate 71 and glutamate 139 together coordinate Mg(2+). CTP is bound by residues 146-148 (DIE), 186-191 (KTKPTQ), and lysine 222. Residues 186-191 (KTKPTQ) and lysine 222 each bind UTP. The region spanning 292-545 (TIAVVGKYVD…IRAARERKAG (254 aa)) is the Glutamine amidotransferase type-1 domain. Position 353 (glycine 353) interacts with L-glutamine. Cysteine 380 functions as the Nucleophile; for glutamine hydrolysis in the catalytic mechanism. Residues 381–384 (YGMQ), glutamate 404, and arginine 471 each bind L-glutamine. Active-site residues include histidine 518 and glutamate 520.

The protein belongs to the CTP synthase family. Homotetramer.

The enzyme catalyses UTP + L-glutamine + ATP + H2O = CTP + L-glutamate + ADP + phosphate + 2 H(+). It catalyses the reaction L-glutamine + H2O = L-glutamate + NH4(+). The catalysed reaction is UTP + NH4(+) + ATP = CTP + ADP + phosphate + 2 H(+). It participates in pyrimidine metabolism; CTP biosynthesis via de novo pathway; CTP from UDP: step 2/2. Its activity is regulated as follows. Allosterically activated by GTP, when glutamine is the substrate; GTP has no effect on the reaction when ammonia is the substrate. The allosteric effector GTP functions by stabilizing the protein conformation that binds the tetrahedral intermediate(s) formed during glutamine hydrolysis. Inhibited by the product CTP, via allosteric rather than competitive inhibition. Functionally, catalyzes the ATP-dependent amination of UTP to CTP with either L-glutamine or ammonia as the source of nitrogen. Regulates intracellular CTP levels through interactions with the four ribonucleotide triphosphates. The protein is CTP synthase of Stenotrophomonas maltophilia (strain K279a).